The sequence spans 155 residues: Small ribosomal subunit protein uS7 (155 aa).

This sequence belongs to the universal ribosomal protein uS7 family. As to quaternary structure, part of the 30S ribosomal subunit. Contacts proteins S9 and S11.

In terms of biological role, one of the primary rRNA binding proteins, it binds directly to 16S rRNA where it nucleates assembly of the head domain of the 30S subunit. Is located at the subunit interface close to the decoding center, probably blocks exit of the E-site tRNA. This chain is Small ribosomal subunit protein uS7, found in Thermotoga petrophila (strain ATCC BAA-488 / DSM 13995 / JCM 10881 / RKU-1).